We begin with the raw amino-acid sequence, 426 residues long: Serine--tRNA ligase (426 aa).

Residues 41-60 (QTRTEQLQAERNARSKSIGQ) are compositionally biased toward polar residues. The disordered stretch occupies residues 41–64 (QTRTEQLQAERNARSKSIGQAKQR). An L-serine-binding site is contributed by 233-235 (TAE). 264–266 (RSE) contacts ATP. E287 is an L-serine binding site. 351–354 (EISS) is a binding site for ATP. Residue S387 coordinates L-serine.

It belongs to the class-II aminoacyl-tRNA synthetase family. Type-1 seryl-tRNA synthetase subfamily. In terms of assembly, homodimer. The tRNA molecule binds across the dimer.

Its subcellular location is the cytoplasm. The catalysed reaction is tRNA(Ser) + L-serine + ATP = L-seryl-tRNA(Ser) + AMP + diphosphate + H(+). It catalyses the reaction tRNA(Sec) + L-serine + ATP = L-seryl-tRNA(Sec) + AMP + diphosphate + H(+). It participates in aminoacyl-tRNA biosynthesis; selenocysteinyl-tRNA(Sec) biosynthesis; L-seryl-tRNA(Sec) from L-serine and tRNA(Sec): step 1/1. Catalyzes the attachment of serine to tRNA(Ser). Is also able to aminoacylate tRNA(Sec) with serine, to form the misacylated tRNA L-seryl-tRNA(Sec), which will be further converted into selenocysteinyl-tRNA(Sec). This chain is Serine--tRNA ligase, found in Pseudomonas fluorescens (strain ATCC BAA-477 / NRRL B-23932 / Pf-5).